The primary structure comprises 619 residues: Calnexin (619 aa).

The N-terminal stretch at 1–21 (MVNRKWMYIFIQFLLVSSIRS) is a signal peptide. D109 is a binding site for Ca(2+). Cysteines 152 and 186 form a disulfide. Y156, K158, Y177, and D184 together coordinate an alpha-D-glucoside. N203 is a glycosylation site (N-linked (GlcNAc...) asparagine). Residues 268 to 401 (IFDETDLKPV…RLIDNPNYFE (134 aa)) are p domain (Extended arm). 5 repeat units span residues 270–282 (DETD…WDER), 287–299 (DESA…WDEN), 306–318 (DEAA…WNEE), 325–337 (DPEA…WDED), and 340–350 (GSWEAPLIDNP). 4 X approximate repeats regions lie at residues 270 to 337 (DETD…WDED) and 340 to 397 (GSWE…IDNP). An intrachain disulfide couples C352 to C358. A run of 3 repeats spans residues 359 to 369 (GTWKAPTIKNP), 373 to 383 (GKWIRPKISNP), and 387 to 397 (GKWTARLIDNP). Residue E417 coordinates an alpha-D-glucoside. Residue D428 participates in Ca(2+) binding. A helical transmembrane segment spans residues 481-501 (LWAVYILCVLLPLVAIGVFCF). The segment at 538 to 619 (GDEEDDVNQP…AKRRTARRGD (82 aa)) is disordered. A compositionally biased stretch (polar residues) spans 547–557 (PGPSGSQSNPE). A compositionally biased stretch (low complexity) spans 566–577 (EQQSANSSQSSA). Residue N571 is glycosylated (N-linked (GlcNAc...) asparagine). Over residues 585–601 (HVVPENEPVKPTEEFAK) the composition is skewed to basic and acidic residues. Residues 610-619 (AKRRTARRGD) are compositionally biased toward basic residues.

The protein belongs to the calreticulin family. Post-translationally, glycosylation is important for its biological activity. As to expression, expressed ubiquitously in every blastomere of the embryo up to the gastrulation stage. Expression becomes gradually restricted to the head and tail regions at the comma stage during embryogenesis. During postembryonic development, expressed prominently in the H-shaped excretory cell, in the neurons of head (including ASK and ADL) and tail (including PHA and PHB), in the dorsal and ventral nerve cords, and in the spermatheca. Expressed in the spicules of the male tail (at protein level).

It is found in the endoplasmic reticulum membrane. It localises to the cytoplasm. The protein localises to the perinuclear region. The protein resides in the cytoplasmic vesicle. In terms of biological role, calcium-binding protein that interacts with newly synthesized monoglucosylated glycoproteins in the endoplasmic reticulum. It may act in assisting protein assembly and/or in the retention within the ER of unassembled protein subunits. It seems to play a major role in the quality control apparatus of the ER by the retention of incorrectly folded proteins. Required for embryogenesis and larval development under heat and ER stress conditions. May be important for germ cell development. Involved in neuronal necrotic cell death. This chain is Calnexin (cnx-1), found in Caenorhabditis elegans.